Consider the following 830-residue polypeptide: Ent-cassa-12,15-diene synthase (830 aa).

A disordered region spans residues 1-50 (MMLLGSPSSGGYGGKFAGASPAGGTTTMAPSAKQPSSRAPPPGITGGRND). Residues 23 to 37 (GGTTTMAPSAKQPSS) are compositionally biased toward polar residues. Mg(2+) contacts are provided by Asp577, Asp581, Asn721, and Glu729. Residues 577–581 (DDLFD) carry the DDXXD motif motif.

Belongs to the terpene synthase family. Mg(2+) is required as a cofactor. In terms of tissue distribution, expressed in roots and stems.

The enzyme catalyses ent-copalyl diphosphate = ent-cassa-12,15-diene + diphosphate. In terms of biological role, involved in phytocassane phytoalexins biosynthesis. Catalyzes the conversion of ent-copalyl diphosphate to the phytoalexin precursor ent-cassa-12,15-diene. This chain is Ent-cassa-12,15-diene synthase (KSL7), found in Oryza sativa subsp. indica (Rice).